The sequence spans 350 residues: MQVSDFHFDLPDELIARYPQSERTASRLLQLNGNTGAVKDGSFKDVLELVQAGDLLVFNNTRVIPARMFGRKESGGKLEVLVERMLDEKRFLAHVRSSKSPKPGTLVFLGEEDQYSAEMVARQDALFELHLKADKTILEVLEEIGHMPLPPYIDRPDEDADKERYQTVYNQKPGAVAAPTAGLHFDNQLLEQIKAKGAEFAYVTLHVGAGTFQPVKVDNILEHHMHSEYAEVPQEVVDAINATKARGGRVIAVGTTSVRSLESAAQESLKNGTELMPFFGDTEIFIFPGYQYQLVDCLITNFHLPESTLIMLVSAFAGYDHTMNAYQHAVSNQYRFFSYGDAMFIEKKTQ.

It belongs to the QueA family. Monomer.

The protein resides in the cytoplasm. The catalysed reaction is 7-aminomethyl-7-carbaguanosine(34) in tRNA + S-adenosyl-L-methionine = epoxyqueuosine(34) in tRNA + adenine + L-methionine + 2 H(+). The protein operates within tRNA modification; tRNA-queuosine biosynthesis. Transfers and isomerizes the ribose moiety from AdoMet to the 7-aminomethyl group of 7-deazaguanine (preQ1-tRNA) to give epoxyqueuosine (oQ-tRNA). In Vibrio vulnificus (strain CMCP6), this protein is S-adenosylmethionine:tRNA ribosyltransferase-isomerase.